We begin with the raw amino-acid sequence, 57 residues long: MIQSPTSFLIVLILLWCKLVLSCFIECLVALQQLIHVLLQIINSNLQSRLLLWHSLD.

The N-terminal stretch at 1–22 is a signal peptide; that stretch reads MIQSPTSFLIVLILLWCKLVLS.

Involved in resistance to IFN. This chain is Non-structural protein 3a, found in Avian infectious bronchitis virus (strain Portugal/322/82) (IBV).